The chain runs to 251 residues: Type III pantothenate kinase (251 aa).

Position 6 to 13 (6 to 13 (DCGNSFIK)) interacts with ATP. Residues Tyr-93 and 100–103 (GLDR) each bind substrate. The active-site Proton acceptor is Asp-102. Asp-122 serves as a coordination point for K(+). Thr-125 is a binding site for ATP. Thr-182 is a binding site for substrate.

Belongs to the type III pantothenate kinase family. Homodimer. NH4(+) is required as a cofactor. K(+) serves as cofactor.

It localises to the cytoplasm. It catalyses the reaction (R)-pantothenate + ATP = (R)-4'-phosphopantothenate + ADP + H(+). It functions in the pathway cofactor biosynthesis; coenzyme A biosynthesis; CoA from (R)-pantothenate: step 1/5. In terms of biological role, catalyzes the phosphorylation of pantothenate (Pan), the first step in CoA biosynthesis. The sequence is that of Type III pantothenate kinase from Azotobacter vinelandii (strain DJ / ATCC BAA-1303).